A 362-amino-acid chain; its full sequence is Heme A synthase (362 aa).

A run of 5 helical transmembrane segments spans residues 10–30, 102–122, 128–148, 159–179, and 198–218; these read LAAIRIWLTVVAGLIALMVLV, VIGMVYLLPFLWFLWRGAVSG, LWLIFGLGALQGAVGWWMVAS, VRLATHLSLALLIFAAIVWTL, and AWGLVGVTFVQLYLGALVAGL. His-262 is a binding site for heme. Helical transmembrane passes span 266–286, 297–317, and 318–338; these read AYTLFLLGAWHAFDVMRAGAG, LAAILVQAGLGIATLLMVVPI, and SLALLHQGTAIIVLTFAVLQA. Heme is bound at residue His-323.

The protein belongs to the COX15/CtaA family. Type 2 subfamily. As to quaternary structure, interacts with CtaB. Requires heme b as cofactor.

The protein resides in the cell membrane. It catalyses the reaction Fe(II)-heme o + 2 A + H2O = Fe(II)-heme a + 2 AH2. Its pathway is porphyrin-containing compound metabolism; heme A biosynthesis; heme A from heme O: step 1/1. In terms of biological role, catalyzes the conversion of heme O to heme A by two successive hydroxylations of the methyl group at C8. The first hydroxylation forms heme I, the second hydroxylation results in an unstable dihydroxymethyl group, which spontaneously dehydrates, resulting in the formyl group of heme A. The sequence is that of Heme A synthase from Bradyrhizobium sp. (strain BTAi1 / ATCC BAA-1182).